Here is a 345-residue protein sequence, read N- to C-terminus: uncharacterized protein (345 aa).

The tract at residues 1 to 98 (MNDEMKGKSG…ISGKSFIDPE (98 aa)) is disordered. Composition is skewed to basic and acidic residues over residues 18–27 (RSDDDSDKRT), 42–68 (SRADGGRRPARDDKQSQPRDRKWEDSP), and 76–86 (PGDETPEKADH).

This sequence belongs to the class IV-like SAM-binding methyltransferase superfamily. RNA methyltransferase TrmH family.

This is an uncharacterized protein from Escherichia coli O157:H7.